The chain runs to 346 residues: Cyclin-dependent kinase 20 (346 aa).

The Protein kinase domain occupies 4–288 (YCILGRIGEG…ASQALLHQYF (285 aa)). ATP contacts are provided by residues 10-18 (IGEGAHGIV) and Lys33. Asp127 (proton acceptor) is an active-site residue. The interval 298–324 (SELPIPQRPGGPTPKAHPGPPHVHDFH) is disordered. Positions 303–318 (PQRPGGPTPKAHPGPP) are enriched in pro residues.

The protein belongs to the protein kinase superfamily. CMGC Ser/Thr protein kinase family. CDC2/CDKX subfamily. As to quaternary structure, monomer. Interacts with TBC1D32 and MAK.

Its subcellular location is the nucleus. The protein localises to the cytoplasm. It localises to the cell projection. It is found in the cilium. The catalysed reaction is L-seryl-[protein] + ATP = O-phospho-L-seryl-[protein] + ADP + H(+). It carries out the reaction L-threonyl-[protein] + ATP = O-phospho-L-threonyl-[protein] + ADP + H(+). Required for high-level Shh responses in the developing neural tube. Together with TBC1D32, controls the structure of the primary cilium by coordinating assembly of the ciliary membrane and axoneme, allowing GLI2 to be properly activated in response to SHH signaling. Involved in cell growth. Activates CDK2, a kinase involved in the control of the cell cycle, by phosphorylating residue 'Thr-160'. This is Cyclin-dependent kinase 20 (Cdk20) from Rattus norvegicus (Rat).